A 509-amino-acid chain; its full sequence is Maturase K (509 aa).

This sequence belongs to the intron maturase 2 family. MatK subfamily.

Its subcellular location is the plastid. The protein resides in the chloroplast. Functionally, usually encoded in the trnK tRNA gene intron. Probably assists in splicing its own and other chloroplast group II introns. This Clematis ligusticifolia (Western white clematis) protein is Maturase K.